Reading from the N-terminus, the 40-residue chain is Natriuretic peptide PpNP-b (40 aa).

The propeptide occupies 1–8 (SGSKTANI). C12 and C28 are joined by a disulfide. The disordered stretch occupies residues 20–40 (IGTTSGMGCGRPRPKPTPGGS).

Belongs to the natriuretic peptide family. Expressed by the venom gland.

The protein localises to the secreted. Its function is as follows. Snake venom natriuretic peptide that targets both NPR1 and NPR2. Exhibits hypotensive and vasodepressor activities. The protein is Natriuretic peptide PpNP-b of Pseudechis porphyriacus (Red-bellied black snake).